Here is a 380-residue protein sequence, read N- to C-terminus: Glycogenin-2 (380 aa).

3 residues coordinate UDP: L10, Y16, and R95. UDP-alpha-D-glucose contacts are provided by L10, Y16, R95, K104, D120, A121, D122, N158, T159, D185, D188, and Q189. D120, A121, and D122 together coordinate UDP. Mn(2+) is bound at residue D120. Mn(2+) is bound at residue D122. Residues Y230 and Y232 are each glycosylated (O-linked (Glc...) tyrosine). Residues H249, G252, and K255 each coordinate UDP. H249 serves as a coordination point for Mn(2+). G252 and K255 together coordinate UDP-alpha-D-glucose. The interval 331–357 (SVDRNASQKSTAEKHDIEKPTSKPQSA) is disordered. Over residues 341–351 (TAEKHDIEKPT) the composition is skewed to basic and acidic residues. Y367 is a glycosylation site (O-linked (Glc...) tyrosine).

Belongs to the glycosyltransferase 8 family. Glycogenin subfamily. As to quaternary structure, interacts with glycogen synthase GSY2. Mn(2+) is required as a cofactor.

The protein localises to the cytoplasm. The protein resides in the vacuole. It carries out the reaction L-tyrosyl-[glycogenin] + UDP-alpha-D-glucose = alpha-D-glucosyl-L-tyrosyl-[glycogenin] + UDP + H(+). The enzyme catalyses [1,4-alpha-D-glucosyl](n)-L-tyrosyl-[glycogenin] + UDP-alpha-D-glucose = [1,4-alpha-D-glucosyl](n+1)-L-tyrosyl-[glycogenin] + UDP + H(+). Functionally, self-glucosylating initiator of glycogen synthesis. It catalyzes the formation of a short alpha (1,4)-glucosyl chain covalently attached via a glucose 1-O-tyrosyl linkage to internal tyrosine residues and these chains act as primers for the elongation reaction catalyzed by glycogen synthase. Capable of transferring glucosyl residues to unbound acceptors such as free oligoglucans or oligoglucan derivatives. The chain is Glycogenin-2 (GLG2) from Saccharomyces cerevisiae (strain YJM789) (Baker's yeast).